The following is a 427-amino-acid chain: Septin-8 (427 aa).

Residues 39–305 (QGFCFNILCV…ELYRRCKLEE (267 aa)) enclose the Septin-type G domain. Positions 49-56 (GETGIGKS) are G1 motif. GTP-binding positions include 49 to 56 (GETGIGKS), Gly104, 185 to 193 (KADTISKSE), Gly239, and Arg254. The interval 101–104 (DTVG) is G3 motif. The segment at 184-187 (AKAD) is G4 motif. Residues 321–409 (QETYEAKRKE…KAAMEALQSQ (89 aa)) adopt a coiled-coil conformation. A disordered region spans residues 373-427 (RVHQEESKKVEDKRRDLEEEMNSFNRRKAAMEALQSQSFQATSQQPLKKDKDRKN). Residues 374 to 389 (VHQEESKKVEDKRRDL) are compositionally biased toward basic and acidic residues. A compositionally biased stretch (polar residues) spans 406–418 (LQSQSFQATSQQP).

This sequence belongs to the TRAFAC class TrmE-Era-EngA-EngB-Septin-like GTPase superfamily. Septin GTPase family.

The protein resides in the cytoplasm. It localises to the cytoskeleton. The protein localises to the synapse. It is found in the cell projection. Its subcellular location is the axon. The protein resides in the cytoplasmic vesicle. It localises to the secretory vesicle. The protein localises to the synaptic vesicle membrane. It is found in the presynapse. The sequence is that of Septin-8 from Xenopus tropicalis (Western clawed frog).